The primary structure comprises 386 residues: Putative 8-amino-7-oxononanoate synthase (386 aa).

R22 is a binding site for substrate. Residue 109-110 (GY) participates in pyridoxal 5'-phosphate binding. A substrate-binding site is contributed by H134. Residues S182, 207 to 210 (DEAH), and 238 to 241 (TLSK) contribute to the pyridoxal 5'-phosphate site. N6-(pyridoxal phosphate)lysine is present on K241. Residue T356 coordinates substrate.

This sequence belongs to the class-II pyridoxal-phosphate-dependent aminotransferase family. BioF subfamily. Homodimer. The cofactor is pyridoxal 5'-phosphate.

It carries out the reaction 6-carboxyhexanoyl-[ACP] + L-alanine + H(+) = (8S)-8-amino-7-oxononanoate + holo-[ACP] + CO2. It participates in cofactor biosynthesis; biotin biosynthesis. In terms of biological role, catalyzes the decarboxylative condensation of pimeloyl-[acyl-carrier protein] and L-alanine to produce 8-amino-7-oxononanoate (AON), [acyl-carrier protein], and carbon dioxide. This Trichormus variabilis (strain ATCC 29413 / PCC 7937) (Anabaena variabilis) protein is Putative 8-amino-7-oxononanoate synthase (bioF).